The chain runs to 637 residues: tRNA 5-methylaminomethyl-2-thiouridine biosynthesis bifunctional protein MnmC (637 aa).

Residues 1–231 form a tRNA (mnm(5)s(2)U34)-methyltransferase region; that stretch reads MPIDPARLAF…KRQMCRGRHR (231 aa). The tract at residues 250–637 is FAD-dependent cmnm(5)s(2)U34 oxidoreductase; sequence IGAGLAGSST…RPARGMTREG (388 aa).

It in the N-terminal section; belongs to the methyltransferase superfamily. tRNA (mnm(5)s(2)U34)-methyltransferase family. The protein in the C-terminal section; belongs to the DAO family. FAD serves as cofactor.

It is found in the cytoplasm. It carries out the reaction 5-aminomethyl-2-thiouridine(34) in tRNA + S-adenosyl-L-methionine = 5-methylaminomethyl-2-thiouridine(34) in tRNA + S-adenosyl-L-homocysteine + H(+). Catalyzes the last two steps in the biosynthesis of 5-methylaminomethyl-2-thiouridine (mnm(5)s(2)U) at the wobble position (U34) in tRNA. Catalyzes the FAD-dependent demodification of cmnm(5)s(2)U34 to nm(5)s(2)U34, followed by the transfer of a methyl group from S-adenosyl-L-methionine to nm(5)s(2)U34, to form mnm(5)s(2)U34. The chain is tRNA 5-methylaminomethyl-2-thiouridine biosynthesis bifunctional protein MnmC from Aromatoleum aromaticum (strain DSM 19018 / LMG 30748 / EbN1) (Azoarcus sp. (strain EbN1)).